A 614-amino-acid chain; its full sequence is UvrABC system protein C (614 aa).

Residues 25 to 103 form the GIY-YIG domain; sequence SVPGVYKMFG…IKSLKPKYNI (79 aa). Positions 214-249 constitute a UVR domain; it reads KEIQCELFEMMCRFSNNQDYESAIVCRDRLHALKSM.

It belongs to the UvrC family. In terms of assembly, interacts with UvrB in an incision complex.

Its subcellular location is the cytoplasm. The UvrABC repair system catalyzes the recognition and processing of DNA lesions. UvrC both incises the 5' and 3' sides of the lesion. The N-terminal half is responsible for the 3' incision and the C-terminal half is responsible for the 5' incision. The protein is UvrABC system protein C of Anaplasma phagocytophilum (strain HZ).